The primary structure comprises 119 residues: Phosphoribosyl-AMP cyclohydrolase (119 aa).

Asp77 contacts Mg(2+). Residue Cys78 coordinates Zn(2+). Mg(2+) is bound by residues Asp79 and Asp81. Zn(2+)-binding residues include Cys94 and Cys101.

The protein belongs to the PRA-CH family. Homodimer. Requires Mg(2+) as cofactor. Zn(2+) serves as cofactor.

The protein resides in the cytoplasm. The catalysed reaction is 1-(5-phospho-beta-D-ribosyl)-5'-AMP + H2O = 1-(5-phospho-beta-D-ribosyl)-5-[(5-phospho-beta-D-ribosylamino)methylideneamino]imidazole-4-carboxamide. Its pathway is amino-acid biosynthesis; L-histidine biosynthesis; L-histidine from 5-phospho-alpha-D-ribose 1-diphosphate: step 3/9. Its function is as follows. Catalyzes the hydrolysis of the adenine ring of phosphoribosyl-AMP. In Dinoroseobacter shibae (strain DSM 16493 / NCIMB 14021 / DFL 12), this protein is Phosphoribosyl-AMP cyclohydrolase.